A 69-amino-acid polypeptide reads, in one-letter code: DNA-directed RNA polymerase subunit epsilon (69 aa).

It belongs to the RNA polymerase subunit epsilon family. RNAP is composed of a core of 2 alpha, a beta and a beta' subunit. The core is associated with a delta subunit, and at least one of epsilon or omega. When a sigma factor is associated with the core the holoenzyme is formed, which can initiate transcription.

It carries out the reaction RNA(n) + a ribonucleoside 5'-triphosphate = RNA(n+1) + diphosphate. In terms of biological role, a non-essential component of RNA polymerase (RNAP). The chain is DNA-directed RNA polymerase subunit epsilon from Bacillus pumilus (strain SAFR-032).